We begin with the raw amino-acid sequence, 344 residues long: UDP-3-O-acylglucosamine N-acyltransferase (344 aa).

Residue H248 is the Proton acceptor of the active site.

It belongs to the transferase hexapeptide repeat family. LpxD subfamily. In terms of assembly, homotrimer.

It catalyses the reaction a UDP-3-O-[(3R)-3-hydroxyacyl]-alpha-D-glucosamine + a (3R)-hydroxyacyl-[ACP] = a UDP-2-N,3-O-bis[(3R)-3-hydroxyacyl]-alpha-D-glucosamine + holo-[ACP] + H(+). It participates in bacterial outer membrane biogenesis; LPS lipid A biosynthesis. Its function is as follows. Catalyzes the N-acylation of UDP-3-O-acylglucosamine using 3-hydroxyacyl-ACP as the acyl donor. Is involved in the biosynthesis of lipid A, a phosphorylated glycolipid that anchors the lipopolysaccharide to the outer membrane of the cell. This is UDP-3-O-acylglucosamine N-acyltransferase from Prochlorococcus marinus (strain MIT 9515).